The following is a 181-amino-acid chain: Akirin-2 (181 aa).

Residues 18–48 form a disordered region; sequence SPAASPKRRRCAPLSPSGPSPQKYLRLEPSP. The short motif at 23-28 is the Nuclear localization signal element; it reads PKRRRC. The SYVS motif motif lies at 178-181; the sequence is SYVS.

It belongs to the akirin family. As to quaternary structure, homodimer. Interacts with actl6a/baf53a. Interacts with gmnn.

It is found in the nucleus. In terms of biological role, molecular adapter that acts as a bridge between a variety of multiprotein complexes, and which is involved in embryonic development, immunity, myogenesis and brain development. Plays a key role in nuclear protein degradation by promoting import of proteasomes into the nucleus: acts by bridging fully assembled 20S proteasomes with nuclear import receptor ipo9. Involved in both neural precursor maintenance and terminal neural differentiation: bridges gmnn and actl6a/baf53a in neural progenitor cells, antagonizing the activity of gmnn, thereby suppressing sox2 expression. Also required for proper activation of neurod1 and neuronal differentiation. Involved in myogenesis: required for skeletal muscle formation and skeletal development, possibly by regulating expression of muscle differentiation factors. The chain is Akirin-2 from Xenopus laevis (African clawed frog).